The sequence spans 230 residues: Orotidine 5'-phosphate decarboxylase (230 aa).

Residues D12, K34, D61 to T70, T116, R177, Q186, and R207 each bind substrate. The active-site Proton donor is K63.

Belongs to the OMP decarboxylase family. Type 1 subfamily. As to quaternary structure, homodimer.

It carries out the reaction orotidine 5'-phosphate + H(+) = UMP + CO2. The protein operates within pyrimidine metabolism; UMP biosynthesis via de novo pathway; UMP from orotate: step 2/2. In terms of biological role, catalyzes the decarboxylation of orotidine 5'-monophosphate (OMP) to uridine 5'-monophosphate (UMP). The sequence is that of Orotidine 5'-phosphate decarboxylase from Rhizobium rhizogenes (strain K84 / ATCC BAA-868) (Agrobacterium radiobacter).